Here is a 203-residue protein sequence, read N- to C-terminus: Probable GTP-binding protein EngB (203 aa).

In terms of domain architecture, EngB-type G spans 21–196 (GAPEIAFLGR…WKKIFEAAGT (176 aa)). Residues 29–36 (GRSNVGKS), 55–59 (GRTQT), 79–82 (DLPG), 146–149 (TKID), and 175–177 (FSA) contribute to the GTP site. The Mg(2+) site is built by S36 and T57.

This sequence belongs to the TRAFAC class TrmE-Era-EngA-EngB-Septin-like GTPase superfamily. EngB GTPase family. The cofactor is Mg(2+).

In terms of biological role, necessary for normal cell division and for the maintenance of normal septation. The chain is Probable GTP-binding protein EngB from Koribacter versatilis (strain Ellin345).